Reading from the N-terminus, the 201-residue chain is MKTLFFATTNENKINEVKNILDIPNLNLIVPQNFNIKETGKTFKENSLLKAKALFEILNNNQNVFGEDSGLCIEALNLEPGIYSKRYDTYKLCKKLSTNEKNQLILDLMKNEKNRKAYFICNISYISKNGQILNFEGIIKGKIALSLNDKKNYGFGYDSIFLTKNNKKLSDLTLEEKNKISHRGIAFLKFKKFLLKSLFNS.

T8 to K13 serves as a coordination point for substrate. D68 (proton acceptor) is an active-site residue. D68 lines the Mg(2+) pocket. Substrate is bound by residues S69, F155–D158, K177, and H182–R183.

This sequence belongs to the HAM1 NTPase family. As to quaternary structure, homodimer. Mg(2+) is required as a cofactor.

It carries out the reaction XTP + H2O = XMP + diphosphate + H(+). The catalysed reaction is dITP + H2O = dIMP + diphosphate + H(+). It catalyses the reaction ITP + H2O = IMP + diphosphate + H(+). Functionally, pyrophosphatase that catalyzes the hydrolysis of nucleoside triphosphates to their monophosphate derivatives, with a high preference for the non-canonical purine nucleotides XTP (xanthosine triphosphate), dITP (deoxyinosine triphosphate) and ITP. Seems to function as a house-cleaning enzyme that removes non-canonical purine nucleotides from the nucleotide pool, thus preventing their incorporation into DNA/RNA and avoiding chromosomal lesions. This chain is dITP/XTP pyrophosphatase, found in Borreliella burgdorferi (strain ATCC 35210 / DSM 4680 / CIP 102532 / B31) (Borrelia burgdorferi).